A 105-amino-acid chain; its full sequence is BLOC-1-related complex subunit 7 (105 aa).

This sequence belongs to the BORCS7 family. As to quaternary structure, component of the BLOC-one-related complex (BORC) which is composed of BLOC1S1, BLOC1S2, BORCS5, BORCS6, BORCS7, BORCS8, KXD1 and SNAPIN.

It is found in the lysosome membrane. Functionally, as part of the BORC complex may play a role in lysosomes movement and localization at the cell periphery. Associated with the cytosolic face of lysosomes, the BORC complex may recruit ARL8B and couple lysosomes to microtubule plus-end-directed kinesin motor. The sequence is that of BLOC-1-related complex subunit 7 from Mus musculus (Mouse).